The sequence spans 342 residues: C-X-C chemokine receptor type 6 (342 aa).

Residues 1-32 lie on the Extracellular side of the membrane; the sequence is MAEYDHYEDNGFNSFNDSSQEEHQDFLQFSKV. An N-linked (GlcNAc...) asparagine glycan is attached at N16. A helical membrane pass occupies residues 33–59; sequence FLPCMYLVVFVCGLVGNSLVLVISIFY. The Cytoplasmic segment spans residues 60–68; that stretch reads HKLQSLTDV. The helical transmembrane segment at 69 to 89 threads the bilayer; sequence FLVNLPLADLVFVCTLPFWAY. Residues 90 to 103 lie on the Extracellular side of the membrane; sequence AGIHEWIFGQVMCK. C102 and C180 form a disulfide bridge. Residues 104-125 form a helical membrane-spanning segment; that stretch reads TLLGIYTINFYTSMLILTCITV. At 126-143 the chain is on the cytoplasmic side; that stretch reads DRFIVVVKATKAYNQQAK. The chain crosses the membrane as a helical span at residues 144 to 164; sequence KMTWGKVICLLIWVISLLVSL. Residues 165 to 187 are Extracellular-facing; sequence PQIIYGNVFNLDKLICGYHDEEI. A helical transmembrane segment spans residues 188–215; sequence STVVLATQMTLGFFLPLLAMIVCYSVII. Topologically, residues 216-231 are cytoplasmic; that stretch reads KTLLHAGGFQKHRSLK. Residues 232–259 traverse the membrane as a helical segment; it reads IIFLVMAVFLLTQTPFNLVKLIRSTHWE. The Extracellular segment spans residues 260-275; the sequence is YYAMTSFHYTIIVTEA. Residues 276-293 traverse the membrane as a helical segment; the sequence is IAYLRACLNPVLYAFVSL. The Cytoplasmic segment spans residues 294–342; sequence KFRKNFWKLVKDIGCLPYLGVSHQWKSSEDNSKTFSASHNVEATSMFQL.

Belongs to the G-protein coupled receptor 1 family.

Its subcellular location is the cell membrane. In terms of biological role, receptor for the C-X-C chemokine CXCL16. Used as a coreceptor by SIVs and by strains of HIV-2 and m-tropic HIV-1. The chain is C-X-C chemokine receptor type 6 (CXCR6) from Chlorocebus aethiops (Green monkey).